We begin with the raw amino-acid sequence, 619 residues long: DNA mismatch repair protein MutL (619 aa).

The tract at residues 339–400 (AEKDDPPAPR…GGASWPHAQP (62 aa)) is disordered.

It belongs to the DNA mismatch repair MutL/HexB family.

This protein is involved in the repair of mismatches in DNA. It is required for dam-dependent methyl-directed DNA mismatch repair. May act as a 'molecular matchmaker', a protein that promotes the formation of a stable complex between two or more DNA-binding proteins in an ATP-dependent manner without itself being part of a final effector complex. The polypeptide is DNA mismatch repair protein MutL (Klebsiella pneumoniae subsp. pneumoniae (strain ATCC 700721 / MGH 78578)).